Here is a 397-residue protein sequence, read N- to C-terminus: Odorant receptor 22a (397 aa).

Topologically, residues 1–49 (MLSKFFPHIKEKPLSERVKSRDAFIYLDRVMWSFGWTEPENKRWILPYK) are cytoplasmic. A helical transmembrane segment spans residues 50–70 (LWLAFVNIVMLILLPISISIE). Topologically, residues 71 to 86 (YLHRFKTFSAGEFLSS) are extracellular. The chain crosses the membrane as a helical span at residues 87–107 (LEIGVNMYGSSFKCAFTLIGF). Residues 108 to 136 (KKRQEAKVLLDQLDKRCLSDKERSTVHRY) are Cytoplasmic-facing. The chain crosses the membrane as a helical span at residues 137–157 (VAMGNFFDILYHIFYSTFVVM). Topologically, residues 158-182 (NFPYFLLERRHAWRMYFPYIDSDEQ) are extracellular. A helical membrane pass occupies residues 183 to 203 (FYISSIAECFLMTEAIYMDLC). Topologically, residues 204 to 263 (TDVCPLISMLMARCHISLLKQRLRNLRSKPGRTEDEYLEELTECIRDHRLLLDYVDALRP) are cytoplasmic. Residues 264–280 (VFSGTIFVQFLLIGTVL) traverse the membrane as a helical segment. Residues 281–286 (GLSMIN) are Extracellular-facing. A helical transmembrane segment spans residues 287–304 (LMFFSTFWTGVATCLFMF). Topologically, residues 305 to 356 (DVSMETFPFCYLCNMIIDDCQEMSNCLFQSDWTSADRRYKSTLVYFLHNLQQ) are cytoplasmic. Residues 357-377 (PITLTAGGVFPISMQTNLAMV) form a helical membrane-spanning segment. Residues 378–397 (KLAFSVVTVIKQFNLAERFQ) lie on the Extracellular side of the membrane.

The protein belongs to the insect chemoreceptor superfamily. Heteromeric odorant receptor channel (TC 1.A.69) family. Or2a subfamily. Interacts with Orco, via conserved C-terminal cytoplasmic loops. Complexes exist early in the endomembrane system in olfactory sensory neurons (OSNs), coupling these complexes to the conserved ciliary trafficking pathway. Interacts with snmp1. Expressed with Orco in 17-20 sensory neurons on the medial-proximal edge of the antenna. Expressed in the ab3A neuron which responds to ethyl butyrate.

It is found in the cell membrane. In terms of biological role, odorant receptor which mediates acceptance or avoidance behavior, depending on its substrates. The odorant receptor repertoire encodes a large collection of odor stimuli that vary widely in identity, intensity, and duration. Involved in the behavioral responses ethyl butyrate and to esters in more general. Complexes with Orco to form odorant-sensing units, providing sensitive and prolonged odorant signaling and calcium permeability. They are necessary and sufficient to promote functional reconstitution of odor-evoked signaling in sensory neurons that normally respond only to carbon dioxide. This chain is Odorant receptor 22a (Or22a), found in Drosophila melanogaster (Fruit fly).